Reading from the N-terminus, the 1012-residue chain is Vacuolar membrane protease (1012 aa).

At 1–60 the chain is on the cytoplasmic side; the sequence is MRRSTDPRNLLVRRGPLLVDGESAISELDPGFFPTGDAPKMSSTTRRRFNLIAFTPGPVT. A helical membrane pass occupies residues 61 to 81; sequence VISSLVYLALLIPLLLVHTIV. The Vacuolar segment spans residues 82-432; sequence PSAPKSNPKG…SFAVFRLHTL (351 aa). N159 carries an N-linked (GlcNAc...) asparagine glycan. H215 and D227 together coordinate Zn(2+). E261 acts as the Proton acceptor in catalysis. Zn(2+) contacts are provided by E262, E287, and H360. A helical membrane pass occupies residues 433–453; sequence FAISVTLLVVCPIVLFVIGII. Residues 454–487 are Cytoplasmic-facing; that stretch reads LSKMDKMYLFSIHETIPETKEKVSVRGLRGLFRY. A helical membrane pass occupies residues 488-508; it reads PIILVVSSGILIGLSYLLAKV. Topologically, residues 509–518 are vacuolar; the sequence is NPFIVHSSSY. Residues 519-539 form a helical membrane-spanning segment; the sequence is AVWSMMLSSWIFMTWFLSCIA. Residues 540-550 lie on the Cytoplasmic side of the membrane; it reads DFFRPSALHRA. The chain crosses the membrane as a helical span at residues 551 to 571; the sequence is YTFTWQLLVMWVLLVISTVYV. Residues 572 to 575 lie on the Vacuolar side of the membrane; the sequence is NQHD. Residues 576–596 form a helical membrane-spanning segment; the sequence is IAAGYFIVFYFAGTFLATLIS. Residues 597 to 710 are Cytoplasmic-facing; that stretch reads YLELFALPNK…WSASLPTWTW (114 aa). Residues 614–629 show a composition bias toward polar residues; the sequence is SQYPSRLGSNRSSRIL. The segment at 614-660 is disordered; that stretch reads SQYPSRLGSNRSSRILSPSADELPTGGDNNGEIYDGEEEPTESSSLL. Residues 711-731 form a helical membrane-spanning segment; that stretch reads VLQFLFVGPVVIMFIGQLGLF. Topologically, residues 732 to 743 are vacuolar; it reads LTSAMNQVGADG. A helical membrane pass occupies residues 744 to 764; that stretch reads VGLLVVYIAIAVFSVLLLIPL. At 765–777 the chain is on the cytoplasmic side; the sequence is SPFIHRFTYHVPT. Residues 778 to 798 traverse the membrane as a helical segment; the sequence is FLLLVFIATLIYNLAAFPFSA. Residues 799 to 1012 are Vacuolar-facing; it reads ENRLKIFFVQ…DGLVEVSRGF (214 aa). Residues N842 and N878 are each glycosylated (N-linked (GlcNAc...) asparagine).

This sequence belongs to the peptidase M28 family. Requires Zn(2+) as cofactor.

Its subcellular location is the vacuole membrane. May be involved in vacuolar sorting and osmoregulation. The chain is Vacuolar membrane protease from Coccidioides posadasii (strain RMSCC 757 / Silveira) (Valley fever fungus).